A 210-amino-acid chain; its full sequence is Glutathione S-transferase P (210 aa).

Positions P2–G81 constitute a GST N-terminal domain. Y4 bears the Phosphotyrosine; by EGFR mark. Glutathione is bound by residues Y8, R14, W39, K45, and Q52–L53. T62 bears the Phosphothreonine mark. Q65–S66 provides a ligand contact to glutathione. The GST C-terminal domain maps to D83–I204. An N6-succinyllysine mark is found at K103 and K116. An N6-acetyllysine modification is found at K128.

This sequence belongs to the GST superfamily. Pi family. In terms of assembly, homodimer. Interacts with CDK5. In terms of tissue distribution, present in kidney, lung, testis and placenta, very low levels in liver.

Its subcellular location is the cytoplasm. It localises to the mitochondrion. It is found in the nucleus. The catalysed reaction is RX + glutathione = an S-substituted glutathione + a halide anion + H(+). It carries out the reaction prostaglandin J2 + glutathione = prostaglandin J2-S-(R)-glutathione. The enzyme catalyses prostaglandin J2 + glutathione = prostaglandin J2-S-(S)-glutathione. It catalyses the reaction prostaglandin A2 + glutathione = prostaglandin A2-S-(S)-glutathione. The catalysed reaction is 11(S)-hydroxy-14(S),15(S)-epoxy-(5Z,8Z,12E)-eicosatrienoate + glutathione = (11S,15S)-dihydroxy-14(R)-S-glutathionyl-(5Z,8Z,12E)-eicosatrienoate. In terms of biological role, conjugation of reduced glutathione to a wide number of exogenous and endogenous hydrophobic electrophiles. Involved in the formation of glutathione conjugates of both prostaglandin A2 (PGA2) and prostaglandin J2 (PGJ2). Participates in the formation of novel hepoxilin regioisomers. Negatively regulates CDK5 activity via p25/p35 translocation to prevent neurodegeneration. This Rattus norvegicus (Rat) protein is Glutathione S-transferase P.